We begin with the raw amino-acid sequence, 114 residues long: Cell cycle protein GpsB (114 aa).

The stretch at 42-77 forms a coiled coil; the sequence is YQKMADMNNEVVKLSEENHKLKKELEELRLRVATSR. A disordered region spans residues 74-99; the sequence is ATSRPQDNKSFSSNNTTTNTSSNNVD. The span at 85 to 97 shows a compositional bias: low complexity; the sequence is SSNNTTTNTSSNN.

Belongs to the GpsB family. Forms polymers through the coiled coil domains. Interacts with PBP1, MreC and EzrA.

Its subcellular location is the cytoplasm. Divisome component that associates with the complex late in its assembly, after the Z-ring is formed, and is dependent on DivIC and PBP2B for its recruitment to the divisome. Together with EzrA, is a key component of the system that regulates PBP1 localization during cell cycle progression. Its main role could be the removal of PBP1 from the cell pole after pole maturation is completed. Also contributes to the recruitment of PBP1 to the division complex. Not essential for septum formation. The protein is Cell cycle protein GpsB of Staphylococcus aureus (strain Mu3 / ATCC 700698).